A 211-amino-acid chain; its full sequence is tRNA (guanine-N(7)-)-methyltransferase (211 aa).

The S-adenosyl-L-methionine site is built by glutamate 44, aspartate 69, aspartate 96, and aspartate 118. Aspartate 118 is a catalytic residue. A substrate-binding site is contributed by lysine 122. The tract at residues 124–129 is interaction with RNA; it reads KHEKRR. Substrate contacts are provided by residues aspartate 154 and 191–194; that span reads TEYE.

It belongs to the class I-like SAM-binding methyltransferase superfamily. TrmB family.

The catalysed reaction is guanosine(46) in tRNA + S-adenosyl-L-methionine = N(7)-methylguanosine(46) in tRNA + S-adenosyl-L-homocysteine. The protein operates within tRNA modification; N(7)-methylguanine-tRNA biosynthesis. Functionally, catalyzes the formation of N(7)-methylguanine at position 46 (m7G46) in tRNA. In Streptococcus agalactiae serotype Ia (strain ATCC 27591 / A909 / CDC SS700), this protein is tRNA (guanine-N(7)-)-methyltransferase.